The primary structure comprises 282 residues: HTH-type transcriptional activator RhaR (282 aa).

An HTH araC/xylS-type domain is found at 179–277 (DKLITRLAAS…GMTPSQWRHL (99 aa)). 2 DNA-binding regions (H-T-H motif) span residues 196–217 (DKFC…RQQT) and 244–267 (ISDI…TRET).

Binds DNA as a dimer.

The protein resides in the cytoplasm. Activates expression of the rhaSR operon in response to L-rhamnose. This is HTH-type transcriptional activator RhaR from Shigella dysenteriae serotype 1 (strain Sd197).